The primary structure comprises 227 residues: Cytochrome c oxidase subunit 2 (227 aa).

Over 1-14 (MAYPFQLGLQDATS) the chain is Mitochondrial intermembrane. The chain crosses the membrane as a helical span at residues 15 to 45 (PIMEELLHFHDHTLMIVFLISSLVLYIISLM). At 46-59 (LTTKLTHTSTMDAQ) the chain is on the mitochondrial matrix side. Residues 60 to 87 (EVETVWTILPAIILILIALPSLRILYMM) traverse the membrane as a helical segment. Topologically, residues 88 to 227 (DEINNPSLTV…YFETWSALMV (140 aa)) are mitochondrial intermembrane. Residues His161, Cys196, Glu198, Cys200, His204, and Met207 each contribute to the Cu cation site. Glu198 serves as a coordination point for Mg(2+). Tyr218 is modified (phosphotyrosine).

This sequence belongs to the cytochrome c oxidase subunit 2 family. In terms of assembly, component of the cytochrome c oxidase (complex IV, CIV), a multisubunit enzyme composed of 14 subunits. The complex is composed of a catalytic core of 3 subunits MT-CO1, MT-CO2 and MT-CO3, encoded in the mitochondrial DNA, and 11 supernumerary subunits COX4I, COX5A, COX5B, COX6A, COX6B, COX6C, COX7A, COX7B, COX7C, COX8 and NDUFA4, which are encoded in the nuclear genome. The complex exists as a monomer or a dimer and forms supercomplexes (SCs) in the inner mitochondrial membrane with NADH-ubiquinone oxidoreductase (complex I, CI) and ubiquinol-cytochrome c oxidoreductase (cytochrome b-c1 complex, complex III, CIII), resulting in different assemblies (supercomplex SCI(1)III(2)IV(1) and megacomplex MCI(2)III(2)IV(2)). Found in a complex with TMEM177, COA6, COX18, COX20, SCO1 and SCO2. Interacts with TMEM177 in a COX20-dependent manner. Interacts with COX20. Interacts with COX16. It depends on Cu cation as a cofactor.

The protein resides in the mitochondrion inner membrane. It carries out the reaction 4 Fe(II)-[cytochrome c] + O2 + 8 H(+)(in) = 4 Fe(III)-[cytochrome c] + 2 H2O + 4 H(+)(out). Its function is as follows. Component of the cytochrome c oxidase, the last enzyme in the mitochondrial electron transport chain which drives oxidative phosphorylation. The respiratory chain contains 3 multisubunit complexes succinate dehydrogenase (complex II, CII), ubiquinol-cytochrome c oxidoreductase (cytochrome b-c1 complex, complex III, CIII) and cytochrome c oxidase (complex IV, CIV), that cooperate to transfer electrons derived from NADH and succinate to molecular oxygen, creating an electrochemical gradient over the inner membrane that drives transmembrane transport and the ATP synthase. Cytochrome c oxidase is the component of the respiratory chain that catalyzes the reduction of oxygen to water. Electrons originating from reduced cytochrome c in the intermembrane space (IMS) are transferred via the dinuclear copper A center (CU(A)) of subunit 2 and heme A of subunit 1 to the active site in subunit 1, a binuclear center (BNC) formed by heme A3 and copper B (CU(B)). The BNC reduces molecular oxygen to 2 water molecules using 4 electrons from cytochrome c in the IMS and 4 protons from the mitochondrial matrix. The protein is Cytochrome c oxidase subunit 2 (MT-CO2) of Canis adustus (Side-striped jackal).